Consider the following 218-residue polypeptide: MLGGTFDPIHDGHLALARRFAELLGLTELVLLPAGQPYQKRDVSAAEHRLAMTRAAAGSLSMPGVTVTVATDEIEHVGPTYTVETLARWRERIGPDASLSLLIGADQLVRLDTWRDWRKLFDYAHICVSTRPGFDLGAAPPDVAQEITARQAGADVLKATSAGHLLIDTTLSFDIAATDIRAHLRECIARHAQMPDASAEHVPAAVWAYILQHRLYHS.

This sequence belongs to the NadD family.

It catalyses the reaction nicotinate beta-D-ribonucleotide + ATP + H(+) = deamido-NAD(+) + diphosphate. It participates in cofactor biosynthesis; NAD(+) biosynthesis; deamido-NAD(+) from nicotinate D-ribonucleotide: step 1/1. In terms of biological role, catalyzes the reversible adenylation of nicotinate mononucleotide (NaMN) to nicotinic acid adenine dinucleotide (NaAD). This chain is Probable nicotinate-nucleotide adenylyltransferase, found in Burkholderia lata (strain ATCC 17760 / DSM 23089 / LMG 22485 / NCIMB 9086 / R18194 / 383).